The following is a 292-amino-acid chain: 4-hydroxy-tetrahydrodipicolinate synthase (292 aa).

Thr-48 serves as a coordination point for pyruvate. Tyr-136 (proton donor/acceptor) is an active-site residue. Residue Lys-164 is the Schiff-base intermediate with substrate of the active site. Pyruvate is bound at residue Ile-204.

Belongs to the DapA family. Homotetramer; dimer of dimers.

Its subcellular location is the cytoplasm. It carries out the reaction L-aspartate 4-semialdehyde + pyruvate = (2S,4S)-4-hydroxy-2,3,4,5-tetrahydrodipicolinate + H2O + H(+). Its pathway is amino-acid biosynthesis; L-lysine biosynthesis via DAP pathway; (S)-tetrahydrodipicolinate from L-aspartate: step 3/4. Its function is as follows. Catalyzes the condensation of (S)-aspartate-beta-semialdehyde [(S)-ASA] and pyruvate to 4-hydroxy-tetrahydrodipicolinate (HTPA). The chain is 4-hydroxy-tetrahydrodipicolinate synthase from Acetivibrio thermocellus (strain ATCC 27405 / DSM 1237 / JCM 9322 / NBRC 103400 / NCIMB 10682 / NRRL B-4536 / VPI 7372) (Clostridium thermocellum).